The primary structure comprises 327 residues: Serine/threonine-protein phosphatase alpha-1 isoform (327 aa).

4 residues coordinate Mn(2+): aspartate 62, histidine 64, aspartate 90, and asparagine 122. Histidine 123 (proton donor) is an active-site residue. 2 residues coordinate Mn(2+): histidine 171 and histidine 246. Residues 308–327 are disordered; it reads GSSGRPLTPPRGANNKNKKK. Threonine 315 carries the post-translational modification Phosphothreonine.

This sequence belongs to the PPP phosphatase family. PP-1 subfamily. In terms of assembly, interacts with Nop17l. The cofactor is Mn(2+).

The catalysed reaction is O-phospho-L-seryl-[protein] + H2O = L-seryl-[protein] + phosphate. It carries out the reaction O-phospho-L-threonyl-[protein] + H2O = L-threonyl-[protein] + phosphate. The protein is Serine/threonine-protein phosphatase alpha-1 isoform (Pp1alpha-96A) of Drosophila melanogaster (Fruit fly).